Consider the following 352-residue polypeptide: Heat-inducible transcription repressor HrcA (352 aa).

This sequence belongs to the HrcA family.

Negative regulator of class I heat shock genes (grpE-dnaK-dnaJ and groELS operons). Prevents heat-shock induction of these operons. This is Heat-inducible transcription repressor HrcA from Chlorobium phaeobacteroides (strain BS1).